A 192-amino-acid chain; its full sequence is Elongation factor P (192 aa).

Residue lysine 38 is modified to N6-(3,6-diaminohexanoyl)-5-hydroxylysine.

The protein belongs to the elongation factor P family. Post-translationally, may be beta-lysylated on the epsilon-amino group of Lys-38 by the combined action of EpmA and EpmB, and then hydroxylated on the C5 position of the same residue by EpmC (if this protein is present). Lysylation is critical for the stimulatory effect of EF-P on peptide-bond formation. The lysylation moiety may extend toward the peptidyltransferase center and stabilize the terminal 3-CCA end of the tRNA. Hydroxylation of the C5 position on Lys-38 may allow additional potential stabilizing hydrogen-bond interactions with the P-tRNA.

Its subcellular location is the cytoplasm. It participates in protein biosynthesis; polypeptide chain elongation. Functionally, involved in peptide bond synthesis. Alleviates ribosome stalling that occurs when 3 or more consecutive Pro residues or the sequence PPG is present in a protein, possibly by augmenting the peptidyl transferase activity of the ribosome. Modification of Lys-38 is required for alleviation. The polypeptide is Elongation factor P (Mannheimia succiniciproducens (strain KCTC 0769BP / MBEL55E)).